A 433-amino-acid polypeptide reads, in one-letter code: tRNA(Ile2) 2-agmatinylcytidine synthetase TiaS (433 aa).

It belongs to the TiaS family.

The protein resides in the cytoplasm. It catalyses the reaction cytidine(34) in tRNA(Ile2) + agmatine + ATP + H2O = 2-agmatinylcytidine(34) in tRNA(Ile2) + AMP + 2 phosphate + 2 H(+). Functionally, ATP-dependent agmatine transferase that catalyzes the formation of 2-agmatinylcytidine (agm2C) at the wobble position (C34) of tRNA(Ile2), converting the codon specificity from AUG to AUA. In Methanopyrus kandleri (strain AV19 / DSM 6324 / JCM 9639 / NBRC 100938), this protein is tRNA(Ile2) 2-agmatinylcytidine synthetase TiaS.